We begin with the raw amino-acid sequence, 323 residues long: Coiled-coil domain-containing protein 160 (323 aa).

The tract at residues 1–81 (MDARRKHWKD…EGEQDSNLRE (81 aa)) is disordered. A compositionally biased stretch (polar residues) spans 48–58 (SNFSVRNTQEG). Positions 144-289 (LRLHLLNEEL…IKNELRVEKT (146 aa)) form a coiled coil.

This sequence belongs to the CCDC160 family.

In Mus musculus (Mouse), this protein is Coiled-coil domain-containing protein 160 (Ccdc160).